Reading from the N-terminus, the 505-residue chain is Exodeoxyribonuclease 7 large subunit (505 aa).

The tract at residues 466–505 (SGDRDAVIDGEGGPAPAPTAPAPKPRPKPAAPPAGQGDLF) is disordered. Residues 480-497 (APAPTAPAPKPRPKPAAP) show a composition bias toward pro residues.

The protein belongs to the XseA family. In terms of assembly, heterooligomer composed of large and small subunits.

The protein resides in the cytoplasm. The enzyme catalyses Exonucleolytic cleavage in either 5'- to 3'- or 3'- to 5'-direction to yield nucleoside 5'-phosphates.. Its function is as follows. Bidirectionally degrades single-stranded DNA into large acid-insoluble oligonucleotides, which are then degraded further into small acid-soluble oligonucleotides. This Caulobacter vibrioides (strain NA1000 / CB15N) (Caulobacter crescentus) protein is Exodeoxyribonuclease 7 large subunit.